Reading from the N-terminus, the 986-residue chain is Isoleucine--tRNA ligase (986 aa).

Positions 534-538 match the 'KMSKS' region motif; sequence EMHKS. Position 537 (Lys-537) interacts with ATP.

Belongs to the class-I aminoacyl-tRNA synthetase family. IleS type 2 subfamily. Monomer. Zn(2+) serves as cofactor.

It is found in the cytoplasm. It catalyses the reaction tRNA(Ile) + L-isoleucine + ATP = L-isoleucyl-tRNA(Ile) + AMP + diphosphate. Its function is as follows. Catalyzes the attachment of isoleucine to tRNA(Ile). As IleRS can inadvertently accommodate and process structurally similar amino acids such as valine, to avoid such errors it has two additional distinct tRNA(Ile)-dependent editing activities. One activity is designated as 'pretransfer' editing and involves the hydrolysis of activated Val-AMP. The other activity is designated 'posttransfer' editing and involves deacylation of mischarged Val-tRNA(Ile). This chain is Isoleucine--tRNA ligase (ileS), found in Saccharolobus solfataricus (strain ATCC 35092 / DSM 1617 / JCM 11322 / P2) (Sulfolobus solfataricus).